Reading from the N-terminus, the 797-residue chain is Kinesin-like protein Klp68D (797 aa).

The 326-residue stretch at 19–344 folds into the Kinesin motor domain; the sequence is CVQVVVRCRP…LRYASRAKSI (326 aa). 106–113 contacts ATP; sequence GQTGTGKT. Residues 350–384 adopt a coiled-coil conformation; sequence KNEDPQDAKLKEYQEEIERLKRLIAPQQQQRSEKQ. 3 disordered regions span residues 371 to 450, 610 to 656, and 722 to 797; these read RLIA…ELER, SSFP…PSSL, and ANSS…LVNK. Over residues 386 to 396 the composition is skewed to basic residues; it reads TIKKQRVKKPK. Over residues 417–431 the composition is skewed to acidic residues; that stretch reads QVDEDRDSDGDGAES. Residues 432–450 are compositionally biased toward basic and acidic residues; it reads ESDKENEAEVAKSNEELER. Residues 432–580 adopt a coiled-coil conformation; sequence ESDKENEAEV…LVKELKRQLL (149 aa). The segment covering 626-638 has biased composition (basic residues); that stretch reads GYRRPVSHPQRRR. Positions 782–791 are enriched in low complexity; that stretch reads KKPASAYPKA.

This sequence belongs to the TRAFAC class myosin-kinesin ATPase superfamily. Kinesin family. Kinesin II subfamily.

The protein resides in the cytoplasm. It is found in the cytoskeleton. Its function is as follows. Plus-end directed microtubule motor that may be used for anterograde axonal transport and could conceivably move cargos in fly neurons different than those moved by kinesin heavy chain or other plus-end directed motors. The protein is Kinesin-like protein Klp68D of Drosophila pseudoobscura pseudoobscura (Fruit fly).